Consider the following 1025-residue polypeptide: Dihydropyrimidine dehydrogenase [NADP(+)] (1025 aa).

The propeptide occupies Met-1–Pro-3. In terms of domain architecture, 4Fe-4S ferredoxin-type 1 spans Glu-69–Phe-100. [4Fe-4S] cluster-binding residues include Cys-79, Cys-82, Cys-87, and Cys-91. Val-129 lines the FAD pocket. The [4Fe-4S] cluster site is built by Cys-130, Cys-136, Cys-140, and Gln-156. Residues Gly-194–Ala-198, Glu-218–Leu-226, Arg-235, and Leu-261 each bind FAD. NADP(+) is bound by residues Ala-340–Thr-343, Arg-364–Lys-365, and Arg-371. Lys-384 is modified (N6-acetyllysine). Residues Ala-437–Gly-439 and Asp-481–Asn-487 each bind NADP(+). Gly-480 to Thr-489 contributes to the FAD binding site. Residues Ser-550 and Lys-574 to Thr-575 each bind FMN. Substrate contacts are provided by residues Asn-609 and Asn-668–Ser-670. Cys-671 acts as the Proton acceptor in catalysis. Lys-709 contacts FMN. Position 736–737 (Asn-736–Thr-737) interacts with substrate. FMN contacts are provided by residues Gly-767, Thr-793–Gly-795, and Cys-816–Ser-817. 2 consecutive 4Fe-4S ferredoxin-type domains span residues Val-944–Glu-976 and His-978–Arg-1007. Residues Cys-953, Cys-956, Cys-959, Cys-963, Cys-986, Cys-989, Cys-992, and Cys-996 each coordinate [4Fe-4S] cluster.

The protein belongs to the dihydropyrimidine dehydrogenase family. Homodimer. FAD serves as cofactor. It depends on FMN as a cofactor. Requires [4Fe-4S] cluster as cofactor.

It localises to the cytoplasm. The enzyme catalyses 5,6-dihydrouracil + NADP(+) = uracil + NADPH + H(+). It carries out the reaction 5,6-dihydrothymine + NADP(+) = thymine + NADPH + H(+). The protein operates within amino-acid biosynthesis; beta-alanine biosynthesis. With respect to regulation, inactivated by 5-iodouracil. In terms of biological role, involved in pyrimidine base degradation. Catalyzes the reduction of uracil and thymine. The sequence is that of Dihydropyrimidine dehydrogenase [NADP(+)] (DPYD) from Sus scrofa (Pig).